Here is a 147-residue protein sequence, read N- to C-terminus: MMKLNLFINANETESYIDIHAPKMNDNVQSIINAVNDLDKSHTLVGYIDKEIHIINVSDVITFQVINKNVTAITSNQKFKLKLRLYELEKQLPQHFIRISKSEIVNKYYIEKLLLEPNGLIRMYLKDAHYTYSSRRYLKSIKERLSI.

Residues 44-147 form the HTH LytTR-type domain; it reads LVGYIDKEIH…LKSIKERLSI (104 aa).

The protein resides in the cytoplasm. This is an uncharacterized protein from Staphylococcus aureus (strain COL).